An 89-amino-acid chain; its full sequence is Small ribosomal subunit protein uS15 (89 aa).

Residues 1–24 form a disordered region; sequence MSLNAETKAGIVEKYRRDPSDTGS. Positions 11 to 20 are enriched in basic and acidic residues; that stretch reads IVEKYRRDPS.

This sequence belongs to the universal ribosomal protein uS15 family. Part of the 30S ribosomal subunit. Forms a bridge to the 50S subunit in the 70S ribosome, contacting the 23S rRNA.

In terms of biological role, one of the primary rRNA binding proteins, it binds directly to 16S rRNA where it helps nucleate assembly of the platform of the 30S subunit by binding and bridging several RNA helices of the 16S rRNA. Its function is as follows. Forms an intersubunit bridge (bridge B4) with the 23S rRNA of the 50S subunit in the ribosome. The sequence is that of Small ribosomal subunit protein uS15 from Thioalkalivibrio sulfidiphilus (strain HL-EbGR7).